Consider the following 438-residue polypeptide: Neutral metalloprotease ShpI (438 aa).

An N-terminal signal peptide occupies residues 1 to 26 (MINKKKLVTSLVTSSLLATFTLGSFA). Positions 27–101 (DAHTYIINNE…KSENALSNSK (75 aa)) are excised as a propeptide. His-242 lines the Zn(2+) pocket. Glu-243 is a catalytic residue. Residues His-246 and Glu-269 each coordinate Zn(2+).

This sequence belongs to the peptidase M30 family. Zn(2+) is required as a cofactor. In terms of processing, several different N-terminal ends may be produced, the favored N-terminus is position 102.

It localises to the secreted. With respect to regulation, inhibited by metal- and zinc-specific inhibitors, such as EDTA and 1,10-phenanthroline in vitro. Is resistant to all inhibitors of serine, cysteine and aspartic proteases. Protease that has a low substrate specificity. Catalyzes the hydrolysis of glucagon, melittin and oxidized beta-insulin at various positions in vitro. Is not able to cleave elastin or the synthetic substrates FAGLA (a substrate for neutral proteinases) and FALGPA (a substrate for collagenase). This Staphylococcus hyicus protein is Neutral metalloprotease ShpI.